A 447-amino-acid chain; its full sequence is tRNA-2-methylthio-N(6)-dimethylallyladenosine synthase (447 aa).

The 116-residue stretch at 1–116 (MYIRTFGCQM…LPDLIKRRRA (116 aa)) folds into the MTTase N-terminal domain. Positions 8, 45, 79, 153, 157, and 160 each coordinate [4Fe-4S] cluster. The Radical SAM core domain occupies 139-372 (RVDGATAFVS…QALINQQAAA (234 aa)). Residues 375–438 (QGMIGTRQRV…TNSLRGRVAG (64 aa)) enclose the TRAM domain.

It belongs to the methylthiotransferase family. MiaB subfamily. In terms of assembly, monomer. [4Fe-4S] cluster serves as cofactor.

It localises to the cytoplasm. The catalysed reaction is N(6)-dimethylallyladenosine(37) in tRNA + (sulfur carrier)-SH + AH2 + 2 S-adenosyl-L-methionine = 2-methylsulfanyl-N(6)-dimethylallyladenosine(37) in tRNA + (sulfur carrier)-H + 5'-deoxyadenosine + L-methionine + A + S-adenosyl-L-homocysteine + 2 H(+). Catalyzes the methylthiolation of N6-(dimethylallyl)adenosine (i(6)A), leading to the formation of 2-methylthio-N6-(dimethylallyl)adenosine (ms(2)i(6)A) at position 37 in tRNAs that read codons beginning with uridine. This Bordetella pertussis (strain Tohama I / ATCC BAA-589 / NCTC 13251) protein is tRNA-2-methylthio-N(6)-dimethylallyladenosine synthase.